The primary structure comprises 344 residues: Heat-inducible transcription repressor HrcA (344 aa).

It belongs to the HrcA family.

Negative regulator of class I heat shock genes (grpE-dnaK-dnaJ and groELS operons). Prevents heat-shock induction of these operons. The chain is Heat-inducible transcription repressor HrcA from Desulforudis audaxviator (strain MP104C).